The following is an 898-amino-acid chain: Alanine--tRNA ligase (898 aa).

His-582, His-586, Cys-685, and His-689 together coordinate Zn(2+).

The protein belongs to the class-II aminoacyl-tRNA synthetase family. Requires Zn(2+) as cofactor.

The protein resides in the cytoplasm. The enzyme catalyses tRNA(Ala) + L-alanine + ATP = L-alanyl-tRNA(Ala) + AMP + diphosphate. In terms of biological role, catalyzes the attachment of alanine to tRNA(Ala) in a two-step reaction: alanine is first activated by ATP to form Ala-AMP and then transferred to the acceptor end of tRNA(Ala). Also edits incorrectly charged Ser-tRNA(Ala) and Gly-tRNA(Ala) via its editing domain. The protein is Alanine--tRNA ligase of Mycolicibacterium vanbaalenii (strain DSM 7251 / JCM 13017 / BCRC 16820 / KCTC 9966 / NRRL B-24157 / PYR-1) (Mycobacterium vanbaalenii).